A 381-amino-acid polypeptide reads, in one-letter code: MSKRRVVVGMSGGVDSSVTAWLLKEQGYDVVGLFMKNWEDDDDGEYCSTRQDWIDVVSVADLIGIDVEAVNFAAEYKDRVFAEFLREYSAGRTPNPDVLCNAEIKFKAFLDHAMSLGAETIATGHYARVRERDGRFELLKAFDHTKDQSYFLHRLNQAQLSKTMFPLGEIPKTKVREIAAQIGLPNAKKKDSTGICFIGERPFRDFLNRYLPTKPGPMKTPDGKLVGEHIGLAFYTFGQRKGIGLGGSKDGSGEPWFVAAKDIASNTLYVVQGHDHPWLLSRELVAGNVSWVAGEPPAEGFACGAKTRYRQADAACTFARAGGERFSLAFADAQWAVTPGQSAVLYDGEICLGGGIIEFAATGQPGHAPAPAAAPALAEAR.

ATP-binding positions include 9 to 16 (GMSGGVDS) and methionine 35. The tract at residues 95–97 (NPD) is interaction with target base in tRNA. Residue cysteine 100 is the Nucleophile of the active site. Cysteine 100 and cysteine 196 are oxidised to a cystine. An ATP-binding site is contributed by glycine 124. Residues 146–148 (KDQ) are interaction with tRNA. The Cysteine persulfide intermediate role is filled by cysteine 196. The interval 308-309 (RY) is interaction with tRNA.

The protein belongs to the MnmA/TRMU family.

The protein localises to the cytoplasm. It catalyses the reaction S-sulfanyl-L-cysteinyl-[protein] + uridine(34) in tRNA + AH2 + ATP = 2-thiouridine(34) in tRNA + L-cysteinyl-[protein] + A + AMP + diphosphate + H(+). Catalyzes the 2-thiolation of uridine at the wobble position (U34) of tRNA, leading to the formation of s(2)U34. In Burkholderia multivorans (strain ATCC 17616 / 249), this protein is tRNA-specific 2-thiouridylase MnmA.